Here is a 63-residue protein sequence, read N- to C-terminus: MVQEKKLRVTLVKSKYGRKPGHRECIEGLGLRRMHQTVEVTDTPANRGMIEKVSYLLMIDEEV.

The protein belongs to the universal ribosomal protein uL30 family. As to quaternary structure, part of the 50S ribosomal subunit.

This is Large ribosomal subunit protein uL30 from Coxiella burnetii (strain CbuK_Q154) (Coxiella burnetii (strain Q154)).